We begin with the raw amino-acid sequence, 232 residues long: Phosphatidylserine decarboxylase proenzyme (232 aa).

S190 acts as the Schiff-base intermediate with substrate; via pyruvic acid in catalysis. S190 bears the Pyruvic acid (Ser); by autocatalysis mark.

It belongs to the phosphatidylserine decarboxylase family. PSD-A subfamily. As to quaternary structure, heterodimer of a large membrane-associated beta subunit and a small pyruvoyl-containing alpha subunit. It depends on pyruvate as a cofactor. In terms of processing, is synthesized initially as an inactive proenzyme. Formation of the active enzyme involves a self-maturation process in which the active site pyruvoyl group is generated from an internal serine residue via an autocatalytic post-translational modification. Two non-identical subunits are generated from the proenzyme in this reaction, and the pyruvate is formed at the N-terminus of the alpha chain, which is derived from the carboxyl end of the proenzyme. The post-translation cleavage follows an unusual pathway, termed non-hydrolytic serinolysis, in which the side chain hydroxyl group of the serine supplies its oxygen atom to form the C-terminus of the beta chain, while the remainder of the serine residue undergoes an oxidative deamination to produce ammonia and the pyruvoyl prosthetic group on the alpha chain.

The protein localises to the cell membrane. The catalysed reaction is a 1,2-diacyl-sn-glycero-3-phospho-L-serine + H(+) = a 1,2-diacyl-sn-glycero-3-phosphoethanolamine + CO2. Its pathway is phospholipid metabolism; phosphatidylethanolamine biosynthesis; phosphatidylethanolamine from CDP-diacylglycerol: step 2/2. Its function is as follows. Catalyzes the formation of phosphatidylethanolamine (PtdEtn) from phosphatidylserine (PtdSer). The sequence is that of Phosphatidylserine decarboxylase proenzyme from Bradyrhizobium sp. (strain BTAi1 / ATCC BAA-1182).